The following is an 83-amino-acid chain: Erabutoxin c (83 aa).

Positions 1 to 21 (MKTLLLTLVVVTIVCLDLGYT) are cleaved as a signal peptide. Positions 24–38 (CFNHQSSQPQTTKTC) are loop I. Intrachain disulfides connect Cys-24/Cys-45, Cys-38/Cys-62, Cys-64/Cys-75, and Cys-76/Cys-81. The interval 39–44 (SPGESS) is stretch between loop I and loop II. A loop II region spans residues 45–62 (CYHKQWSDFRGTIIERGC). A loop III region spans residues 64 to 75 (CPTVKPGINLSC).

This sequence belongs to the three-finger toxin family. Short-chain subfamily. Type I alpha-neurotoxin sub-subfamily. As to expression, expressed by the venom gland.

It localises to the secreted. In terms of biological role, binds to muscle nicotinic acetylcholine receptor (nAChR) and inhibit acetylcholine from binding to the receptor, thereby impairing neuromuscular transmission. Binds to Torpedo marmorata nAChR (Kd=0.14 nM). This is Erabutoxin c from Laticauda semifasciata (Black-banded sea krait).